The following is a 219-amino-acid chain: Oligoribonuclease (219 aa).

An Exonuclease domain is found at 19 to 184; the sequence is LVWVDLEMTG…ADIVESIREL (166 aa). Residue Tyr-141 is part of the active site.

It belongs to the oligoribonuclease family.

The protein localises to the cytoplasm. 3'-to-5' exoribonuclease specific for small oligoribonucleotides. This chain is Oligoribonuclease, found in Corynebacterium glutamicum (strain R).